We begin with the raw amino-acid sequence, 180 residues long: CASP-like protein 5A1 (180 aa).

Residues 1-36 (MEVSHPAVHPVAVPPVLTEPPARVRMKDYQGMPGTL) are Cytoplasmic-facing. Residues 37–57 (GGLALRLGQLGFAVLSFSIMV) traverse the membrane as a helical segment. Residues 58–67 (STPDFSQVTA) lie on the Extracellular side of the membrane. The helical transmembrane segment at 68–88 (FCYLVAATVLQTLWSSITAVV) threads the bilayer. The Cytoplasmic segment spans residues 89-102 (DIYALSVRRSLHHS). A helical transmembrane segment spans residues 103-123 (LLVGLFAVGDGVTSTLTFAAA). Over 124–150 (CATAGITVLIDNDLDECGQNHCGRFEA) the chain is Extracellular. Residues 151–171 (AAAMAFLSWIMAAPSFLLAFW) form a helical membrane-spanning segment. Residues 172-180 (SFGNKIVCF) are Cytoplasmic-facing.

The protein belongs to the Casparian strip membrane proteins (CASP) family. In terms of assembly, homodimer and heterodimers.

Its subcellular location is the cell membrane. The protein is CASP-like protein 5A1 of Pteridium aquilinum subsp. aquilinum (Bracken fern).